The sequence spans 391 residues: S-adenosylmethionine synthase (391 aa).

Histidine 14 lines the ATP pocket. Aspartate 16 is a binding site for Mg(2+). Glutamate 42 lines the K(+) pocket. L-methionine-binding residues include glutamate 55 and glutamine 98. The flexible loop stretch occupies residues 98–108 (QSVDIAMGVDE). ATP-binding positions include 172-174 (DGK), 238-239 (RF), aspartate 247, 253-254 (RK), alanine 270, and lysine 274. Aspartate 247 contacts L-methionine. Lysine 278 is a binding site for L-methionine.

The protein belongs to the AdoMet synthase family. Homotetramer; dimer of dimers. Mg(2+) serves as cofactor. The cofactor is K(+).

The protein resides in the cytoplasm. It carries out the reaction L-methionine + ATP + H2O = S-adenosyl-L-methionine + phosphate + diphosphate. The protein operates within amino-acid biosynthesis; S-adenosyl-L-methionine biosynthesis; S-adenosyl-L-methionine from L-methionine: step 1/1. Its function is as follows. Catalyzes the formation of S-adenosylmethionine (AdoMet) from methionine and ATP. The overall synthetic reaction is composed of two sequential steps, AdoMet formation and the subsequent tripolyphosphate hydrolysis which occurs prior to release of AdoMet from the enzyme. This Clostridium botulinum (strain Kyoto / Type A2) protein is S-adenosylmethionine synthase.